The primary structure comprises 380 residues: Erythronate-4-phosphate dehydrogenase (380 aa).

2 residues coordinate substrate: Ser-45 and Thr-66. NAD(+) contacts are provided by Asp-146 and Thr-174. Arg-207 is an active-site residue. Residue Asp-231 participates in NAD(+) binding. Residue Glu-236 is part of the active site. His-253 serves as the catalytic Proton donor. Gly-256 contributes to the NAD(+) binding site. Substrate is bound at residue Tyr-257.

Belongs to the D-isomer specific 2-hydroxyacid dehydrogenase family. PdxB subfamily. Homodimer.

It is found in the cytoplasm. The enzyme catalyses 4-phospho-D-erythronate + NAD(+) = (R)-3-hydroxy-2-oxo-4-phosphooxybutanoate + NADH + H(+). The protein operates within cofactor biosynthesis; pyridoxine 5'-phosphate biosynthesis; pyridoxine 5'-phosphate from D-erythrose 4-phosphate: step 2/5. Functionally, catalyzes the oxidation of erythronate-4-phosphate to 3-hydroxy-2-oxo-4-phosphonooxybutanoate. The polypeptide is Erythronate-4-phosphate dehydrogenase (Pseudomonas fluorescens (strain Pf0-1)).